The primary structure comprises 38 residues: Photosystem II reaction center protein L (38 aa).

The helical transmembrane segment at 17–37 (SLYWGLLLIFVLAVLFSNYFF) threads the bilayer.

Belongs to the PsbL family. As to quaternary structure, PSII is composed of 1 copy each of membrane proteins PsbA, PsbB, PsbC, PsbD, PsbE, PsbF, PsbH, PsbI, PsbJ, PsbK, PsbL, PsbM, PsbT, PsbX, PsbY, PsbZ, Psb30/Ycf12, at least 3 peripheral proteins of the oxygen-evolving complex and a large number of cofactors. It forms dimeric complexes.

It localises to the plastid. Its subcellular location is the chloroplast thylakoid membrane. In terms of biological role, one of the components of the core complex of photosystem II (PSII). PSII is a light-driven water:plastoquinone oxidoreductase that uses light energy to abstract electrons from H(2)O, generating O(2) and a proton gradient subsequently used for ATP formation. It consists of a core antenna complex that captures photons, and an electron transfer chain that converts photonic excitation into a charge separation. This subunit is found at the monomer-monomer interface and is required for correct PSII assembly and/or dimerization. The chain is Photosystem II reaction center protein L from Ananas comosus (Pineapple).